A 625-amino-acid chain; its full sequence is tRNA uridine 5-carboxymethylaminomethyl modification enzyme MnmG (625 aa).

14 to 19 provides a ligand contact to FAD; the sequence is GAGHAG. 273-287 provides a ligand contact to NAD(+); the sequence is GPRYCPSIEDKIVRF.

This sequence belongs to the MnmG family. As to quaternary structure, homodimer. Heterotetramer of two MnmE and two MnmG subunits. It depends on FAD as a cofactor.

Its subcellular location is the cytoplasm. Its function is as follows. NAD-binding protein involved in the addition of a carboxymethylaminomethyl (cmnm) group at the wobble position (U34) of certain tRNAs, forming tRNA-cmnm(5)s(2)U34. This Clostridium botulinum (strain Loch Maree / Type A3) protein is tRNA uridine 5-carboxymethylaminomethyl modification enzyme MnmG.